The chain runs to 546 residues: Elongator complex protein 3 (546 aa).

Residues 81 to 371 (RTASGIAVVA…YRVQRDIPMP (291 aa)) form the Radical SAM core domain. Residues Cys-98, Cys-108, and Cys-111 each contribute to the [4Fe-4S] cluster site. Acetyl-CoA-binding positions include Lys-163, 473-476 (ELHV), 496-498 (FGM), and Tyr-529. Positions 395-546 (TQCRDVRTRE…EGPYMVKRLQ (152 aa)) constitute an N-acetyltransferase domain.

This sequence belongs to the ELP3 family. As to quaternary structure, component of the elongator complex. [4Fe-4S] cluster is required as a cofactor.

It is found in the cytoplasm. The protein resides in the nucleus. It catalyses the reaction uridine(34) in tRNA + acetyl-CoA + S-adenosyl-L-methionine + H2O = 5-(carboxymethyl)uridine(34) in tRNA + 5'-deoxyadenosine + L-methionine + CoA + 2 H(+). It participates in tRNA modification; 5-methoxycarbonylmethyl-2-thiouridine-tRNA biosynthesis. In terms of biological role, catalytic tRNA acetyltransferase subunit of the elongator complex which is required for multiple tRNA modifications, including mcm5U (5-methoxycarbonylmethyl uridine), mcm5s2U (5-methoxycarbonylmethyl-2-thiouridine), and ncm5U (5-carbamoylmethyl uridine). In the elongator complex, acts as a tRNA uridine(34) acetyltransferase by mediating formation of carboxymethyluridine in the wobble base at position 34 in tRNAs. The protein is Elongator complex protein 3 of Gallus gallus (Chicken).